The following is a 56-amino-acid chain: MIKVKLVRSRIGCNPNQRRTLDALGLRKIRQEKTFEDNAVVRGMIAKVVHLVEVTE.

It belongs to the universal ribosomal protein uL30 family. In terms of assembly, part of the 50S ribosomal subunit.

The polypeptide is Large ribosomal subunit protein uL30 (Oleidesulfovibrio alaskensis (strain ATCC BAA-1058 / DSM 17464 / G20) (Desulfovibrio alaskensis)).